Reading from the N-terminus, the 286-residue chain is ATP-binding protein ChvD (286 aa).

One can recognise an ABC transporter domain in the interval 21-85 (KLQDMIDSQN…DLLLLDEPTN (65 aa)).

The protein belongs to the ABC transporter superfamily.

In terms of biological role, the induction of virG by growth under acidic conditions and by phosphate starvation, in the absence of plant inducers, is influenced by ChvD. This chain is ATP-binding protein ChvD (chvD), found in Rhizobium radiobacter (Agrobacterium tumefaciens).